A 1013-amino-acid chain; its full sequence is Sodium/potassium-transporting ATPase subunit alpha-3 (1013 aa).

Residues 1 to 10 (MGDKKDDKSS) show a composition bias toward basic and acidic residues. A disordered region spans residues 1–24 (MGDKKDDKSSPKKSKAKERRDLDD). Residues 1–77 (MGDKKDDKSS…NALTPPPTTP (77 aa)) are Cytoplasmic-facing. A phosphoserine mark is found at Ser-37 and Ser-56. Positions 72 to 74 (PPP) are interaction with phosphoinositide-3 kinase. The helical transmembrane segment at 78 to 98 (EWVKFCRQLFGGFSILLWIGA) threads the bilayer. Over 99 to 121 (ILCFLAYGIQAGTEDDPSGDNLY) the chain is Extracellular. Residues 122–142 (LGIVLAAVVIITGCFSYYQEA) form a helical membrane-spanning segment. Over 143-278 (KSSKIMESFK…VGKTPIAIEI (136 aa)) the chain is Cytoplasmic. Ser-218 and Ser-265 each carry phosphoserine. A helical membrane pass occupies residues 279–298 (EHFIQLITGVAVFLGVSFFI). At 299–310 (LSLILGYTWLEA) the chain is on the extracellular side. Residues 311–328 (VIFLIGIIVANVPEGLLA) traverse the membrane as a helical segment. The Cytoplasmic portion of the chain corresponds to 329–762 (TVTVCLTLTA…EEGRLIFDNL (434 aa)). Asp-366 serves as the catalytic 4-aspartylphosphate intermediate. Residue Ser-442 is modified to Phosphoserine. Phosphotyrosine is present on Tyr-548. 2 residues coordinate Mg(2+): Asp-707 and Asp-711. Residues 763–782 (KKSIAYTLTSNIPEITPFLL) form a helical membrane-spanning segment. Topologically, residues 783–792 (FIMANIPLPL) are extracellular. Residues 793–813 (GTITILCIDLGTDMVPAISLA) traverse the membrane as a helical segment. Residues 814–833 (YEAAESDIMKRQPRNPRTDK) are Cytoplasmic-facing. Residues 834 to 856 (LVNERLISMAYGQIGMIQALGGF) traverse the membrane as a helical segment. At 857-908 (FSYFVILAENGFLPGNLVGIRLNWDDRTVNDLEDSYGQQWTYEQRKVVEFTC) the chain is on the extracellular side. The helical transmembrane segment at 909–928 (HTAFFVSIVVVQWADLIICK) threads the bilayer. The Cytoplasmic portion of the chain corresponds to 929–941 (TRRNSVFQQGMKN). Position 933 is a phosphoserine; by PKA (Ser-933). Residues 942 to 960 (KILIFGLFEETALAAFLSY) traverse the membrane as a helical segment. The Extracellular portion of the chain corresponds to 961–975 (CPGMDVALRMYPLKP). A helical transmembrane segment spans residues 976–996 (SWWFCAFPYSFLIFVYDEIRK). At 997–1013 (LILRRNPGGWVEKETYY) the chain is on the cytoplasmic side.

The protein belongs to the cation transport ATPase (P-type) (TC 3.A.3) family. Type IIC subfamily. In terms of assembly, the sodium/potassium-transporting ATPase is composed of a catalytic alpha subunit, an auxiliary non-catalytic beta subunit and an additional regulatory subunit. Interacts with regulatory subunit FXYD1.

The protein localises to the cell membrane. The catalysed reaction is K(+)(out) + Na(+)(in) + ATP + H2O = K(+)(in) + Na(+)(out) + ADP + phosphate + H(+). Its function is as follows. This is the catalytic component of the active enzyme, which catalyzes the hydrolysis of ATP coupled with the exchange of sodium and potassium ions across the plasma membrane. This action creates the electrochemical gradient of sodium and potassium ions, providing the energy for active transport of various nutrients. The protein is Sodium/potassium-transporting ATPase subunit alpha-3 (Atp1a3) of Mus musculus (Mouse).